The chain runs to 210 residues: Ribosomal RNA large subunit methyltransferase E (210 aa).

S-adenosyl-L-methionine contacts are provided by glycine 67, tryptophan 69, aspartate 87, aspartate 103, and aspartate 128. Catalysis depends on lysine 168, which acts as the Proton acceptor.

Belongs to the class I-like SAM-binding methyltransferase superfamily. RNA methyltransferase RlmE family.

The protein localises to the cytoplasm. It catalyses the reaction uridine(2552) in 23S rRNA + S-adenosyl-L-methionine = 2'-O-methyluridine(2552) in 23S rRNA + S-adenosyl-L-homocysteine + H(+). Functionally, specifically methylates the uridine in position 2552 of 23S rRNA at the 2'-O position of the ribose in the fully assembled 50S ribosomal subunit. This is Ribosomal RNA large subunit methyltransferase E from Psychrobacter arcticus (strain DSM 17307 / VKM B-2377 / 273-4).